The primary structure comprises 773 residues: MFGGEYDHAYDANNGQRFQPPVLDAMEFEKPGSPSVGDHFLRQQISNQSLHDQYSSHMEQQQQQQQQQHNAAYGAGFTDIPQLHPSTPPHGLVQKISNGNFHPAMNQGGNIPSTSNMNNMFNTPPPTMGNNPLYSHDNNSTNLLQDNLNQARSQFSPDRYSVDSDFNNGAGNHVMANGNYNINGSQSSSPYHQPQTFYTNSNLSSGQLSAHRSSPQRQPAQPLQQTTFTQLPQPSLPPQQQQQQQQQQQQQQQQQPKFQSMVPPQQTQLQQQQQQELQNAGSYMYFERRPDLLSKSTQDKAAAVKLKVENYYQQSVKYAIERNERRVELETELGSHNWSEERNARQLASLGKKESQFLRLRRTRLSLEDFHTVQVIGKGAFGEVRLVQKKDTGKIYAMKTLLKSEMYKKDQLAHVKAERDVLAGTDSPWIVSLYYSFQDAQYLYLIMEFLPGGDLMTMLIRWQLFTEDVTRFYMAECILAIETIHKLGFIHRDIKPDNILIDIRGHIKLSDFGLSTGFHKTHDSNYYKKLLQQDEATTKNGAPNDAGDGSNNRQTMIVDSINLTMSNRQQIQTWRKSRRLMAYSTVGTPDYIAPEIFLYQGYGQDCDWWSLGAIMYECLIGWPPFCSETPQETYRKIMNFEQTLQFPEDVHISYEAEDLIRRLLTHSNQRLGRQGGADEIKSHPFFRGVDWNTIRQVEAPYIPKLSSITDTRFFPTDELENVPDSPAMAQAAKQREQMMKNGVNPNQNQVKEDLPFIGYTYSRFDYLTRKNAL.

Composition is skewed to polar residues over residues 50–59 (LHDQYSSHME) and 178–217 (GNYN…SPQR). Disordered stretches follow at residues 50–111 (LHDQ…GGNI) and 177–275 (NGNY…QQQQ). Composition is skewed to low complexity over residues 218–256 (QPAQ…QQQP) and 265–275 (QQTQLQQQQQQ). In terms of domain architecture, Protein kinase spans 370-686 (FHTVQVIGKG…ADEIKSHPFF (317 aa)). Residues 376 to 384 (IGKGAFGEV) and Lys-399 each bind ATP. Asp-493 functions as the Proton acceptor in the catalytic mechanism. The region spanning 687-771 (RGVDWNTIRQ…SRFDYLTRKN (85 aa)) is the AGC-kinase C-terminal domain.

It belongs to the protein kinase superfamily. STE Ser/Thr protein kinase family. COT1 subfamily.

The catalysed reaction is L-seryl-[protein] + ATP = O-phospho-L-seryl-[protein] + ADP + H(+). It carries out the reaction L-threonyl-[protein] + ATP = O-phospho-L-threonyl-[protein] + ADP + H(+). Its function is as follows. Protein kinase that seems to play a role in the regulation of cell morphogenesis and proliferation. The polypeptide is Serine/threonine-protein kinase CBK1 (CBK1) (Candida glabrata (strain ATCC 2001 / BCRC 20586 / JCM 3761 / NBRC 0622 / NRRL Y-65 / CBS 138) (Yeast)).